Here is a 393-residue protein sequence, read N- to C-terminus: Phospho-N-acetylmuramoyl-pentapeptide-transferase (393 aa).

Transmembrane regions (helical) follow at residues Arg29–Ile49, Thr75–Phe95, Phe101–Trp121, Tyr138–Glu158, Val194–Ala214, Gly226–Thr246, Ala263–Phe283, Val290–Ile310, Ile315–Val335, and Gln370–Leu390.

This sequence belongs to the glycosyltransferase 4 family. MraY subfamily. Mg(2+) is required as a cofactor.

It localises to the cell inner membrane. The catalysed reaction is UDP-N-acetyl-alpha-D-muramoyl-L-alanyl-gamma-D-glutamyl-meso-2,6-diaminopimeloyl-D-alanyl-D-alanine + di-trans,octa-cis-undecaprenyl phosphate = di-trans,octa-cis-undecaprenyl diphospho-N-acetyl-alpha-D-muramoyl-L-alanyl-D-glutamyl-meso-2,6-diaminopimeloyl-D-alanyl-D-alanine + UMP. It functions in the pathway cell wall biogenesis; peptidoglycan biosynthesis. In terms of biological role, catalyzes the initial step of the lipid cycle reactions in the biosynthesis of the cell wall peptidoglycan: transfers peptidoglycan precursor phospho-MurNAc-pentapeptide from UDP-MurNAc-pentapeptide onto the lipid carrier undecaprenyl phosphate, yielding undecaprenyl-pyrophosphoryl-MurNAc-pentapeptide, known as lipid I. This Leptothrix cholodnii (strain ATCC 51168 / LMG 8142 / SP-6) (Leptothrix discophora (strain SP-6)) protein is Phospho-N-acetylmuramoyl-pentapeptide-transferase.